Consider the following 110-residue polypeptide: UPF0122 protein GK1195 (110 aa).

It belongs to the UPF0122 family.

Functionally, might take part in the signal recognition particle (SRP) pathway. This is inferred from the conservation of its genetic proximity to ftsY/ffh. May be a regulatory protein. The protein is UPF0122 protein GK1195 of Geobacillus kaustophilus (strain HTA426).